Consider the following 452-residue polypeptide: Probable dihydrolipoyllysine-residue succinyltransferase component of 2-oxoglutarate dehydrogenase complex, mitochondrial (452 aa).

Residues 42-117 (STRIKTPPFP…TIDQDIAVID (76 aa)) enclose the Lipoyl-binding domain. Lysine 83 is modified (N6-lipoyllysine). The interval 119 to 225 (SAAPPEGGSA…FSRNEDRVKM (107 aa)) is disordered. Basic and acidic residues-rich tracts occupy residues 130–144 (PKKDEVKTADADAAK), 154–170 (KPIEEKPMPDLGAEQKE), and 195–209 (AKSEPVKQSKPKATE). Active-site residues include histidine 424 and aspartate 428.

Belongs to the 2-oxoacid dehydrogenase family. It depends on (R)-lipoate as a cofactor.

It is found in the mitochondrion. It carries out the reaction N(6)-[(R)-dihydrolipoyl]-L-lysyl-[protein] + succinyl-CoA = N(6)-[(R)-S(8)-succinyldihydrolipoyl]-L-lysyl-[protein] + CoA. It functions in the pathway amino-acid degradation; L-lysine degradation via saccharopine pathway; glutaryl-CoA from L-lysine: step 6/6. Its function is as follows. The 2-oxoglutarate dehydrogenase complex catalyzes the overall conversion of 2-oxoglutarate to succinyl-CoA and CO(2). It contains multiple copies of three enzymatic components: 2-oxoglutarate dehydrogenase (E1), dihydrolipoamide succinyltransferase (E2) and lipoamide dehydrogenase (E3). This Schizosaccharomyces pombe (strain 972 / ATCC 24843) (Fission yeast) protein is Probable dihydrolipoyllysine-residue succinyltransferase component of 2-oxoglutarate dehydrogenase complex, mitochondrial (kgd2).